Reading from the N-terminus, the 314-residue chain is GTPase Era (314 aa).

In terms of domain architecture, Era-type G spans 7–188 (RCGFAAVIGS…REFIAGLMPE (182 aa)). The segment at 15-22 (GSPNAGKS) is G1. GTP is bound at residue 15 to 22 (GSPNAGKS). Residues 41 to 45 (QTTRF) form a G2 region. Residues 62–65 (DTPG) form a G3 region. GTP-binding positions include 62–66 (DTPGV) and 138–141 (NKVD). Residues 138–141 (NKVD) are G4. Positions 167-169 (ISA) are G5. A KH type-2 domain is found at 219 to 296 (LHEELPYASM…HLFLNVKVDA (78 aa)).

This sequence belongs to the TRAFAC class TrmE-Era-EngA-EngB-Septin-like GTPase superfamily. Era GTPase family. Monomer.

The protein resides in the cytoplasm. It is found in the cell inner membrane. An essential GTPase that binds both GDP and GTP, with rapid nucleotide exchange. Plays a role in 16S rRNA processing and 30S ribosomal subunit biogenesis and possibly also in cell cycle regulation and energy metabolism. In Maricaulis maris (strain MCS10) (Caulobacter maris), this protein is GTPase Era.